The sequence spans 73 residues: Putative membrane protein insertion efficiency factor (73 aa).

It belongs to the UPF0161 family.

Its subcellular location is the cell inner membrane. In terms of biological role, could be involved in insertion of integral membrane proteins into the membrane. The polypeptide is Putative membrane protein insertion efficiency factor (Treponema denticola (strain ATCC 35405 / DSM 14222 / CIP 103919 / JCM 8153 / KCTC 15104)).